Consider the following 402-residue polypeptide: Protein arginine methyltransferase NDUFAF7 homolog, mitochondrial (402 aa).

It belongs to the NDUFAF7 family.

Its subcellular location is the mitochondrion. It catalyses the reaction L-arginyl-[protein] + 2 S-adenosyl-L-methionine = N(omega),N(omega)'-dimethyl-L-arginyl-[protein] + 2 S-adenosyl-L-homocysteine + 2 H(+). In terms of biological role, arginine methyltransferase involved in the assembly or stability of mitochondrial NADH:ubiquinone oxidoreductase complex (complex I). The chain is Protein arginine methyltransferase NDUFAF7 homolog, mitochondrial from Saccharomyces cerevisiae (strain ATCC 204508 / S288c) (Baker's yeast).